A 272-amino-acid chain; its full sequence is Putative phosphoenolpyruvate synthase regulatory protein (272 aa).

152-159 (GVSRCGKT) contributes to the ADP binding site.

This sequence belongs to the pyruvate, phosphate/water dikinase regulatory protein family. PSRP subfamily.

It carries out the reaction [pyruvate, water dikinase] + ADP = [pyruvate, water dikinase]-phosphate + AMP + H(+). The enzyme catalyses [pyruvate, water dikinase]-phosphate + phosphate + H(+) = [pyruvate, water dikinase] + diphosphate. Bifunctional serine/threonine kinase and phosphorylase involved in the regulation of the phosphoenolpyruvate synthase (PEPS) by catalyzing its phosphorylation/dephosphorylation. The protein is Putative phosphoenolpyruvate synthase regulatory protein of Pseudomonas putida (strain ATCC 47054 / DSM 6125 / CFBP 8728 / NCIMB 11950 / KT2440).